Consider the following 441-residue polypeptide: Putative collagenous domain-containing protein R238 (441 aa).

Positions 164–199 (GCKGEKGIKGELGPKGNTGQKGDIGSKGDRGDKGEP) constitute a Collagen-like domain. Positions 171 to 198 (IKGELGPKGNTGQKGDIGSKGDRGDKGE) are disordered. The segment covering 187 to 198 (IGSKGDRGDKGE) has biased composition (basic and acidic residues).

The sequence is that of Putative collagenous domain-containing protein R238 from Acanthamoeba polyphaga (Amoeba).